A 458-amino-acid polypeptide reads, in one-letter code: Argininosuccinate lyase (458 aa).

The protein belongs to the lyase 1 family. Argininosuccinate lyase subfamily.

The protein localises to the cytoplasm. The catalysed reaction is 2-(N(omega)-L-arginino)succinate = fumarate + L-arginine. It functions in the pathway amino-acid biosynthesis; L-arginine biosynthesis; L-arginine from L-ornithine and carbamoyl phosphate: step 3/3. This Salmonella agona (strain SL483) protein is Argininosuccinate lyase.